A 208-amino-acid chain; its full sequence is uncharacterized protein (208 aa).

4Fe-4S ferredoxin-type domains lie at 59 to 88, 114 to 145, 147 to 176, and 174 to 203; these read GVLV…SVGT, GDLN…WQQK, GCIT…VNTE, and NTES…IIEW. [4Fe-4S] cluster is bound by residues Cys68, Cys71, Cys74, Cys78, Cys123, Cys126, Cys131, Cys135, Cys156, Cys159, Cys162, Cys166, Cys183, Cys186, Cys189, and Cys193.

This is an uncharacterized protein from Escherichia coli O157:H7.